A 93-amino-acid polypeptide reads, in one-letter code: Small ribosomal subunit protein bS6 (93 aa).

Belongs to the bacterial ribosomal protein bS6 family.

Its function is as follows. Binds together with bS18 to 16S ribosomal RNA. The protein is Small ribosomal subunit protein bS6 (rpsF) of Treponema pallidum (strain Nichols).